Here is a 327-residue protein sequence, read N- to C-terminus: Phenylalanine--tRNA ligase alpha subunit (327 aa).

Residue glutamate 252 participates in Mg(2+) binding.

Belongs to the class-II aminoacyl-tRNA synthetase family. Phe-tRNA synthetase alpha subunit type 1 subfamily. Tetramer of two alpha and two beta subunits. Mg(2+) serves as cofactor.

It localises to the cytoplasm. It carries out the reaction tRNA(Phe) + L-phenylalanine + ATP = L-phenylalanyl-tRNA(Phe) + AMP + diphosphate + H(+). This Aeromonas hydrophila subsp. hydrophila (strain ATCC 7966 / DSM 30187 / BCRC 13018 / CCUG 14551 / JCM 1027 / KCTC 2358 / NCIMB 9240 / NCTC 8049) protein is Phenylalanine--tRNA ligase alpha subunit.